The chain runs to 719 residues: B3 domain-containing protein Os03g0120900 (719 aa).

The segment at residues histidine 7–asparagine 110 is a DNA-binding region (TF-B3). Disordered regions lie at residues arginine 328 to glutamine 381 and glutamate 412 to valine 443. Residues aspartate 351–proline 366 are compositionally biased toward basic and acidic residues. Over residues histidine 416–asparagine 430 the composition is skewed to polar residues.

The protein resides in the nucleus. In Oryza sativa subsp. japonica (Rice), this protein is B3 domain-containing protein Os03g0120900.